The chain runs to 396 residues: Elongation factor Tu (396 aa).

In terms of domain architecture, tr-type G spans 10–206; that stretch reads KPHVNVGTIG…TMDSYIPEPV (197 aa). A G1 region spans residues 19–26; it reads GHVDHGKT. A GTP-binding site is contributed by 19–26; it reads GHVDHGKT. Threonine 26 contacts Mg(2+). Positions 60 to 64 are G2; it reads GITIS. A G3 region spans residues 81 to 84; that stretch reads DCPG. Residues 81-85 and 136-139 contribute to the GTP site; these read DCPGH and NKAD. Residues 136-139 form a G4 region; the sequence is NKAD. Positions 174-176 are G5; it reads SAL.

Belongs to the TRAFAC class translation factor GTPase superfamily. Classic translation factor GTPase family. EF-Tu/EF-1A subfamily. In terms of assembly, monomer.

Its subcellular location is the cytoplasm. It carries out the reaction GTP + H2O = GDP + phosphate + H(+). Functionally, GTP hydrolase that promotes the GTP-dependent binding of aminoacyl-tRNA to the A-site of ribosomes during protein biosynthesis. The polypeptide is Elongation factor Tu (Legionella pneumophila (strain Lens)).